We begin with the raw amino-acid sequence, 422 residues long: UDP-N-acetylglucosamine 1-carboxyvinyltransferase (422 aa).

Lys23–Asn24 lines the phosphoenolpyruvate pocket. Position 92 (Arg92) interacts with UDP-N-acetyl-alpha-D-glucosamine. Cys116 serves as the catalytic Proton donor. A 2-(S-cysteinyl)pyruvic acid O-phosphothioketal modification is found at Cys116. Residues Arg121–Leu125, Lys161–Gly165, Asp306, and Ile328 contribute to the UDP-N-acetyl-alpha-D-glucosamine site.

The protein belongs to the EPSP synthase family. MurA subfamily.

It localises to the cytoplasm. The enzyme catalyses phosphoenolpyruvate + UDP-N-acetyl-alpha-D-glucosamine = UDP-N-acetyl-3-O-(1-carboxyvinyl)-alpha-D-glucosamine + phosphate. It functions in the pathway cell wall biogenesis; peptidoglycan biosynthesis. Functionally, cell wall formation. Adds enolpyruvyl to UDP-N-acetylglucosamine. This chain is UDP-N-acetylglucosamine 1-carboxyvinyltransferase, found in Aliivibrio fischeri (strain MJ11) (Vibrio fischeri).